The sequence spans 193 residues: Phosphoheptose isomerase (193 aa).

The 157-residue stretch at 37-193 (LADSFKAGGK…QLIEKEMVKA (157 aa)) folds into the SIS domain. 52-54 (NGG) lines the substrate pocket. Zn(2+) is bound by residues H61 and E65. Residues E65, 93–94 (ND), 119–121 (STS), S124, and Q172 each bind substrate. Zn(2+)-binding residues include Q172 and H180.

This sequence belongs to the SIS family. GmhA subfamily. Homotetramer. Zn(2+) serves as cofactor.

The protein localises to the cytoplasm. The catalysed reaction is 2 D-sedoheptulose 7-phosphate = D-glycero-alpha-D-manno-heptose 7-phosphate + D-glycero-beta-D-manno-heptose 7-phosphate. Its pathway is carbohydrate biosynthesis; D-glycero-D-manno-heptose 7-phosphate biosynthesis; D-glycero-alpha-D-manno-heptose 7-phosphate and D-glycero-beta-D-manno-heptose 7-phosphate from sedoheptulose 7-phosphate: step 1/1. Catalyzes the isomerization of sedoheptulose 7-phosphate in D-glycero-D-manno-heptose 7-phosphate. The sequence is that of Phosphoheptose isomerase from Yersinia pseudotuberculosis serotype O:1b (strain IP 31758).